An 890-amino-acid chain; its full sequence is UPF0182 protein SYNW1212 (890 aa).

8 helical membrane passes run 21–41 (WLLQ…AIRW), 64–84 (LTLL…NGLI), 98–118 (WQVS…LVAV), 134–154 (AVVL…SIPL), 173–193 (FAAL…CLGN), 219–239 (RLLM…CWLS), 268–288 (LLTV…SLLL), and 295–315 (VLAV…WLIL).

The protein belongs to the UPF0182 family.

The protein resides in the cell membrane. This chain is UPF0182 protein SYNW1212, found in Parasynechococcus marenigrum (strain WH8102).